The chain runs to 240 residues: MLSTAAYRDVERELGMGPHGSAGPVQLRFSPYAFNGGTVLAIAGEDFSIVASDTRLSEGFSIHTRDSPKCYKLTDKTVIGCSGFHGDCLTLTKIIEARLKMYKHSNNKAMTTGAIAAMLSTILYSRRFFPYYVYNIIGGLDEEGKGAVYSFDPVGSYQRDSFKAGGSASAMLQPLLDNQVGFKNMQNVEHVPLTLDRAMRLVKDVFISAAERDVYTGDALRICIVTKEGIREETVPLRKD.

Methionine 1 bears the N-acetylmethionine mark. Positions 1–27 (MLSTAAYRDVERELGMGPHGSAGPVQL) are excised as a propeptide. O-linked (GlcNAc) serine glycosylation is present at serine 57. Phosphoserine is present on residues serine 61 and serine 67. The residue at position 149 (tyrosine 149) is a Phosphotyrosine. Serine 161 bears the Phosphoserine mark. Residue lysine 203 is modified to N6-acetyllysine. An O-linked (GlcNAc) serine glycan is attached at serine 208.

Belongs to the peptidase T1B family. The 26S proteasome consists of a 20S proteasome core and two 19S regulatory subunits. The 20S proteasome core is a barrel-shaped complex made of 28 subunits that are arranged in four stacked rings. The two outer rings are each formed by seven alpha subunits, and the two inner rings are formed by seven beta subunits. The proteolytic activity is exerted by three beta-subunits PSMB5, PSMB6 and PSMB7. Interacts with SERPINB2. Interacts with RFPL4A. As to expression, detected in liver (at protein level).

It localises to the cytoplasm. The protein resides in the nucleus. Functionally, non-catalytic component of the 20S core proteasome complex involved in the proteolytic degradation of most intracellular proteins. This complex plays numerous essential roles within the cell by associating with different regulatory particles. Associated with two 19S regulatory particles, forms the 26S proteasome and thus participates in the ATP-dependent degradation of ubiquitinated proteins. The 26S proteasome plays a key role in the maintenance of protein homeostasis by removing misfolded or damaged proteins that could impair cellular functions, and by removing proteins whose functions are no longer required. Associated with the PA200 or PA28, the 20S proteasome mediates ubiquitin-independent protein degradation. This type of proteolysis is required in several pathways including spermatogenesis (20S-PA200 complex) or generation of a subset of MHC class I-presented antigenic peptides (20S-PA28 complex). This is Proteasome subunit beta type-1 (Psmb1) from Mus musculus (Mouse).